A 214-amino-acid chain; its full sequence is N-(5'-phosphoribosyl)anthranilate isomerase (214 aa).

It belongs to the TrpF family.

The enzyme catalyses N-(5-phospho-beta-D-ribosyl)anthranilate = 1-(2-carboxyphenylamino)-1-deoxy-D-ribulose 5-phosphate. It participates in amino-acid biosynthesis; L-tryptophan biosynthesis; L-tryptophan from chorismate: step 3/5. The chain is N-(5'-phosphoribosyl)anthranilate isomerase from Halorubrum lacusprofundi (strain ATCC 49239 / DSM 5036 / JCM 8891 / ACAM 34).